Reading from the N-terminus, the 301-residue chain is Acetylglutamate kinase (301 aa).

Residues 76–77 (GG), R98, and N192 each bind substrate.

The protein belongs to the acetylglutamate kinase family. ArgB subfamily.

It localises to the cytoplasm. The enzyme catalyses N-acetyl-L-glutamate + ATP = N-acetyl-L-glutamyl 5-phosphate + ADP. It participates in amino-acid biosynthesis; L-arginine biosynthesis; N(2)-acetyl-L-ornithine from L-glutamate: step 2/4. Catalyzes the ATP-dependent phosphorylation of N-acetyl-L-glutamate. In Chlorobaculum parvum (strain DSM 263 / NCIMB 8327) (Chlorobium vibrioforme subsp. thiosulfatophilum), this protein is Acetylglutamate kinase.